Consider the following 291-residue polypeptide: Homeobox protein SIX2 (291 aa).

A DNA-binding region (homeobox) is located at residues 124 to 183 (GEETSYCFKEKSRSVLREWYAHNPYPSPREKRELAEATGLTTTQVSNWFKNRRQRDRAAE). The interval 168–279 (VSNWFKNRRQ…HHHGLQDSIL (112 aa)) is disordered. The span at 179–190 (DRAAEAKERENN) shows a compositional bias: basic and acidic residues. Residues 224 to 233 (HSSSSPALLL) are compositionally biased toward low complexity. The span at 249-259 (PPGPSAVPVPV) shows a compositional bias: pro residues.

The protein belongs to the SIX/Sine oculis homeobox family. As to quaternary structure, interacts with TCF7L2; in a canonical Wnt signaling independent manner; prevents transcription of differentiation genes in cap mesenchyme. Interacts with OSR1; form a strong repressor complex with TCF7L2, TLE2 and TLE3 to prevent the activation of Wnt/beta-catenin target genes in the cap mesenchyme. Interacts with HOXA11, EYA1 and EYA3. In terms of tissue distribution, strongly expressed in skeletal muscle. Expressed in Wilms' tumor and in the cap mesenchyme of fetal kidney (at protein level).

It localises to the nucleus. Functionally, transcription factor that plays an important role in the development of several organs, including kidney, skull and stomach. During kidney development, maintains cap mesenchyme multipotent nephron progenitor cells in an undifferentiated state by opposing the inductive signals emanating from the ureteric bud and cooperates with WNT9B to promote renewing progenitor cells proliferation. Acts through its interaction with TCF7L2 and OSR1 in a canonical Wnt signaling independent manner preventing transcription of differentiation genes in cap mesenchyme such as WNT4. Also acts independently of OSR1 to activate expression of many cap mesenchyme genes, including itself, GDNF and OSR1. During craniofacial development plays a role in growth and elongation of the cranial base through regulation of chondrocyte differentiation. During stomach organogenesis, controls pyloric sphincter formation and mucosal growth through regulation of a gene network including NKX2-5, BMPR1B, BMP4, SOX9 and GREM1. During branchial arch development, acts to mediate HOXA2 control over the insulin-like growth factor pathway. May also be involved in limb tendon and ligament development. Plays a role in cell proliferation and migration. This Homo sapiens (Human) protein is Homeobox protein SIX2 (SIX2).